A 306-amino-acid chain; its full sequence is Leucotoxin LukEv (306 aa).

Positions 1 to 23 (MLAATLSVGLIAPLASPIQESRA) are cleaved as a signal peptide.

Belongs to the aerolysin family. As to quaternary structure, toxicity requires sequential binding and synergistic association of a class S and a class F component which form heterooligomeric complexes. LukEv (class S) associates with LukDv (class F).

Its subcellular location is the secreted. Functionally, part of a bi-component leucotoxin that acts by forming pores in the membrane of the target cells. The activity of LukEv-LukDv to rabbit leukocytes is similar to that of the Panton-Valentine leucocidin (PVL). LukEv-LukDv is hemolytic to rabbit red blood cells although the activity is only 8% of gamma-hemolysin. The chain is Leucotoxin LukEv (lukEv) from Staphylococcus aureus (strain NCTC 8325 / PS 47).